Consider the following 485-residue polypeptide: MAMASLYRRSLPSPPAIDFSSAEGKLIFNEALQKGTMEGFFRLISYFQTQSEPAYCGLASLSVVLNALSIDPGRKWKGPWRWFDESMLDCCEPLEVVKEKGISFGKVVCLAHCSGAKVEAFRTSQSTIDDFRKFVVKCTSSENCHMISTYHRGVFKQTGTGHFSPIGGYNAERDMALILDVARFKYPPHWVPLKLLWEAMDSIDQSTGKRRGFMLISRPHREPGLLYTLSCKDESWIEIAKYLKEDVPRLVSSQHVDSVEKIISVVFKSLPSNFNQFIRWVAEIRITEDSNQNLSAEEKSRLKLKQLVLKEVHETELFKHINKFLSTVGYEDSLTYAAAKACCQGAEILSGSPSKEFCCRETCVKCIKGPDDSEGTVVTGVVVRDGNEQKVDLLVPSTQTECECGPEATYPAGNDVFTALLLALPPQTWSGIKDQALMHEMKQLISMASLPTLLQEEVLHLRRQLQLLKRCQENKEEDDLAAPAY.

Positions 1–221 (MAMASLYRRS…GFMLISRPHR (221 aa)) constitute a Peptidase C83 domain. Active-site residues include Cys-56, His-162, and Asp-180.

It belongs to the phytochelatin synthase family. In terms of tissue distribution, expressed in roots and shoots.

The catalysed reaction is [Glu(-Cys)](n)-Gly + glutathione + H(+) = [Glu(-Cys)](n+1)-Gly + glycine. With respect to regulation, requires cadmium for activity. Also activated in vitro or in heterologous system by Ag(+), Hg(+), Zn(2+), Cu(2+), Fe(2+) or Fe(3+) ions, but not by Co(2+) or Ni(2+) ions. Involved in the synthesis of phytochelatins (PC) and homophytochelatins (hPC), the heavy-metal-binding peptides of plants. Also involved in glutathione-conjugates degradation. The chain is Glutathione gamma-glutamylcysteinyltransferase 1 (PCS1) from Arabidopsis thaliana (Mouse-ear cress).